Consider the following 166-residue polypeptide: MKYTSYFLALLLCVLLGFSGSYGQGQFFREIENLKEYFNASNPDVAKGGPLFSEILKNWKDESDKKIIQSQIVSFYFKLFENLKDNQIIQRSMDIIKQNMFQKFLNGSSEKLEDFKKLIQIPVDDLQTQRKAINELIKVMNDLSPKSNLRKRKRSQNLFRGRRASM.

Positions 1-23 (MKYTSYFLALLLCVLLGFSGSYG) are cleaved as a signal peptide. Gln24 is subject to Pyrrolidone carboxylic acid. N-linked (GlcNAc...) asparagine glycosylation is found at Asn39 and Asn106.

It belongs to the type II (or gamma) interferon family. As to quaternary structure, homodimer. Interacts with IFNGR1 (via extracellular domain); this interaction promotes IFNGR1 dimerization. As to expression, released primarily from activated T lymphocytes.

It is found in the secreted. Type II interferon produced by immune cells such as T-cells and NK cells that plays crucial roles in antimicrobial, antiviral, and antitumor responses by activating effector immune cells and enhancing antigen presentation. Primarily signals through the JAK-STAT pathway after interaction with its receptor IFNGR1 to affect gene regulation. Upon IFNG binding, IFNGR1 intracellular domain opens out to allow association of downstream signaling components JAK2, JAK1 and STAT1, leading to STAT1 activation, nuclear translocation and transcription of IFNG-regulated genes. Many of the induced genes are transcription factors such as IRF1 that are able to further drive regulation of a next wave of transcription. Plays a role in class I antigen presentation pathway by inducing a replacement of catalytic proteasome subunits with immunoproteasome subunits. In turn, increases the quantity, quality, and repertoire of peptides for class I MHC loading. Increases the efficiency of peptide generation also by inducing the expression of activator PA28 that associates with the proteasome and alters its proteolytic cleavage preference. Up-regulates as well MHC II complexes on the cell surface by promoting expression of several key molecules such as cathepsins B/CTSB, H/CTSH, and L/CTSL. Participates in the regulation of hematopoietic stem cells during development and under homeostatic conditions by affecting their development, quiescence, and differentiation. This chain is Interferon gamma (IFNG), found in Bubalus carabanensis (Swamp type water buffalo).